The chain runs to 62 residues: Photosystem II reaction center protein Z (62 aa).

2 helical membrane-spanning segments follow: residues 8-28 (AVFA…VVLA) and 41-61 (FSGA…NSFV).

The protein belongs to the PsbZ family. In terms of assembly, PSII is composed of 1 copy each of membrane proteins PsbA, PsbB, PsbC, PsbD, PsbE, PsbF, PsbH, PsbI, PsbJ, PsbK, PsbL, PsbM, PsbT, PsbY, PsbZ, Psb30/Ycf12, at least 3 peripheral proteins of the oxygen-evolving complex and a large number of cofactors. It forms dimeric complexes.

It is found in the plastid. The protein resides in the chloroplast thylakoid membrane. Functionally, may control the interaction of photosystem II (PSII) cores with the light-harvesting antenna, regulates electron flow through the 2 photosystem reaction centers. PSII is a light-driven water plastoquinone oxidoreductase, using light energy to abstract electrons from H(2)O, generating a proton gradient subsequently used for ATP formation. The chain is Photosystem II reaction center protein Z from Zygnema circumcarinatum (Green alga).